The chain runs to 255 residues: Homeobox-leucine zipper protein ATHB-23 (255 aa).

The homeobox DNA-binding region spans 68 to 127 (MGEKKRRLNMEQLKALEKDFELGNKLESDRKLELARALGLQPRQIAIWFQNRRARSKTKQ). A leucine-zipper region spans residues 128 to 163 (LEKDYDMLKRQFESLRDENEVLQTQNQKLQAQVMAL).

It belongs to the HD-ZIP homeobox family. Class I subfamily. In terms of tissue distribution, expressed in young leaves, in the adaxial domain of leaf primordia and the rib meristem. Expressed in the styles of flowers and siliques.

It is found in the nucleus. Its function is as follows. Probable transcription factor. The chain is Homeobox-leucine zipper protein ATHB-23 (ATHB-23) from Arabidopsis thaliana (Mouse-ear cress).